A 428-amino-acid polypeptide reads, in one-letter code: D-amino acid dehydrogenase (428 aa).

3–17 (VVILGSGVVGVASAY) contributes to the FAD binding site.

It belongs to the DadA oxidoreductase family. It depends on FAD as a cofactor.

The catalysed reaction is a D-alpha-amino acid + A + H2O = a 2-oxocarboxylate + AH2 + NH4(+). It functions in the pathway amino-acid degradation; D-alanine degradation; NH(3) and pyruvate from D-alanine: step 1/1. Functionally, oxidative deamination of D-amino acids. The polypeptide is D-amino acid dehydrogenase (Burkholderia vietnamiensis (strain G4 / LMG 22486) (Burkholderia cepacia (strain R1808))).